The sequence spans 102 residues: Small ribosomal subunit protein uS10 (102 aa).

It belongs to the universal ribosomal protein uS10 family. In terms of assembly, part of the 30S ribosomal subunit.

Involved in the binding of tRNA to the ribosomes. This is Small ribosomal subunit protein uS10 from Rhodospirillum rubrum (strain ATCC 11170 / ATH 1.1.1 / DSM 467 / LMG 4362 / NCIMB 8255 / S1).